Consider the following 545-residue polypeptide: Acetyltransferase BOT5 (545 aa).

Residues 1-19 (MATIPLFFSLILFLRLYHA) form the signal peptide. Asn-70 and Asn-198 each carry an N-linked (GlcNAc...) asparagine glycan. Residue His-208 is the Proton acceptor of the active site. Residues Asn-346 and Asn-445 are each glycosylated (N-linked (GlcNAc...) asparagine). The interval 466-493 (GAGNQKSSSTRKAARHTEPTQAQTQPGR) is disordered.

This sequence belongs to the plant acyltransferase family.

It functions in the pathway secondary metabolite biosynthesis. In terms of biological role, acetyltransferase; part of the gene cluster that mediates the biosynthesis of botrydial. Botrydial is necessary for colonization of plant tissue by the T4 strain. It is a strain-dependent virulence factor since highly aggressive strains like SAS56 or B05 still retain substantial virulence when botrydial synthesis is impaired, since they produce also botcinic acid. The first step of botrydial biosynthesis is performed by the sesquiterpene synthase BOT2 which catalyzes the cyclization of farnesyl diphosphate (FPP) to presilphiperfolan-8-beta-ol (PSP). The cytochrome P450 monooxygenase BOT4 then catalyzes the hydroxylation at C-4 to give a probotryane intermediate. Acetylation of the hydroxyl at C-4 is carried out by the acetyltransferase BOT5, followed by the combined action of the P450 monooxygenases BOT3 and BOT1, to yield finally the glycol, via the regio- and stereospecific hydroxylations at C-10 and C-15 of the probotryane intermediates, respectively. The cleavage of the C10-C15 bond of probotryane skeleton is an intriguing and chemically important reaction, which could be mediated by some of the monooxygenases or by a combination of them. It is possible that either BOT3 or BOT1 would oxidize either the 10- or the 15-hydroxy group to the hydroperoxide derivative, which would then undergo heterolytic fragmentation to give the dialdehyde botrydial. Finally, the dehydrogenase BOT7 might be involved in the conversion of botrydial to dihydrobotrydial. The sequence is that of Acetyltransferase BOT5 from Botryotinia fuckeliana (Noble rot fungus).